Consider the following 931-residue polypeptide: Protein translocase subunit SecA (931 aa).

ATP contacts are provided by residues Q87, 105-109 (GEGKT), and D515. Zn(2+) is bound by residues C915, C917, C926, and H927.

Belongs to the SecA family. Monomer and homodimer. Part of the essential Sec protein translocation apparatus which comprises SecA, SecYEG and auxiliary proteins SecDF-YajC and YidC. The cofactor is Zn(2+).

It is found in the cell inner membrane. The protein localises to the cytoplasm. The enzyme catalyses ATP + H2O + cellular proteinSide 1 = ADP + phosphate + cellular proteinSide 2.. In terms of biological role, part of the Sec protein translocase complex. Interacts with the SecYEG preprotein conducting channel. Has a central role in coupling the hydrolysis of ATP to the transfer of proteins into and across the cell membrane, serving both as a receptor for the preprotein-SecB complex and as an ATP-driven molecular motor driving the stepwise translocation of polypeptide chains across the membrane. This chain is Protein translocase subunit SecA, found in Burkholderia ambifaria (strain ATCC BAA-244 / DSM 16087 / CCUG 44356 / LMG 19182 / AMMD) (Burkholderia cepacia (strain AMMD)).